Reading from the N-terminus, the 195-residue chain is Large ribosomal subunit protein uL11m (195 aa).

It belongs to the universal ribosomal protein uL11 family. As to quaternary structure, component of the mitochondrial ribosome large subunit (39S) which comprises a 16S rRNA and about 50 distinct proteins.

It localises to the mitochondrion. This Caenorhabditis elegans protein is Large ribosomal subunit protein uL11m (mrpl-11).